We begin with the raw amino-acid sequence, 191 residues long: UPF0312 protein Shewana3_1179 (191 aa).

The signal sequence occupies residues 1-22; that stretch reads MKKQLLAALIGGSLLAPMAASA.

Belongs to the UPF0312 family. Type 1 subfamily.

It is found in the periplasm. This is UPF0312 protein Shewana3_1179 from Shewanella sp. (strain ANA-3).